The primary structure comprises 156 residues: Methylated-DNA--protein-cysteine methyltransferase (156 aa).

The active-site Nucleophile; methyl group acceptor is the Cys-120.

This sequence belongs to the MGMT family.

Its subcellular location is the cytoplasm. The catalysed reaction is a 6-O-methyl-2'-deoxyguanosine in DNA + L-cysteinyl-[protein] = S-methyl-L-cysteinyl-[protein] + a 2'-deoxyguanosine in DNA. It carries out the reaction a 4-O-methyl-thymidine in DNA + L-cysteinyl-[protein] = a thymidine in DNA + S-methyl-L-cysteinyl-[protein]. In terms of biological role, involved in the cellular defense against the biological effects of O6-methylguanine (O6-MeG) and O4-methylthymine (O4-MeT) in DNA. Repairs the methylated nucleobase in DNA by stoichiometrically transferring the methyl group to a cysteine residue in the enzyme. This is a suicide reaction: the enzyme is irreversibly inactivated. The protein is Methylated-DNA--protein-cysteine methyltransferase of Metallosphaera sedula (strain ATCC 51363 / DSM 5348 / JCM 9185 / NBRC 15509 / TH2).